The chain runs to 132 residues: Small ribosomal subunit protein uS8c (132 aa).

It belongs to the universal ribosomal protein uS8 family. As to quaternary structure, part of the 30S ribosomal subunit.

The protein resides in the plastid. Its subcellular location is the chloroplast. One of the primary rRNA binding proteins, it binds directly to 16S rRNA central domain where it helps coordinate assembly of the platform of the 30S subunit. This chain is Small ribosomal subunit protein uS8c (rps8), found in Staurastrum punctulatum (Green alga).